A 154-amino-acid chain; its full sequence is Myoglobin (154 aa).

A Globin domain is found at 2-148 (GLSDGEWQLV…FRNDIAAKYK (147 aa)). Ser4 carries the phosphoserine modification. His65 provides a ligand contact to nitrite. His65 serves as a coordination point for O2. Thr68 is subject to Phosphothreonine. His94 provides a ligand contact to heme b.

Belongs to the globin family. As to quaternary structure, monomeric.

The protein localises to the cytoplasm. Its subcellular location is the sarcoplasm. The enzyme catalyses Fe(III)-heme b-[protein] + nitric oxide + H2O = Fe(II)-heme b-[protein] + nitrite + 2 H(+). The catalysed reaction is H2O2 + AH2 = A + 2 H2O. Functionally, monomeric heme protein which primary function is to store oxygen and facilitate its diffusion within muscle tissues. Reversibly binds oxygen through a pentacoordinated heme iron and enables its timely and efficient release as needed during periods of heightened demand. Depending on the oxidative conditions of tissues and cells, and in addition to its ability to bind oxygen, it also has a nitrite reductase activity whereby it regulates the production of bioactive nitric oxide. Under stress conditions, like hypoxia and anoxia, it also protects cells against reactive oxygen species thanks to its pseudoperoxidase activity. This Spalax ehrenbergi (Middle East blind mole rat) protein is Myoglobin (MB).